Reading from the N-terminus, the 70-residue chain is Small ribosomal subunit protein bS21B (70 aa).

It belongs to the bacterial ribosomal protein bS21 family.

In Burkholderia thailandensis (strain ATCC 700388 / DSM 13276 / CCUG 48851 / CIP 106301 / E264), this protein is Small ribosomal subunit protein bS21B.